An 87-amino-acid chain; its full sequence is Small ribosomal subunit protein bS18 (87 aa).

This sequence belongs to the bacterial ribosomal protein bS18 family. As to quaternary structure, part of the 30S ribosomal subunit. Forms a tight heterodimer with protein bS6.

Its function is as follows. Binds as a heterodimer with protein bS6 to the central domain of the 16S rRNA, where it helps stabilize the platform of the 30S subunit. The sequence is that of Small ribosomal subunit protein bS18 from Nitratidesulfovibrio vulgaris (strain ATCC 29579 / DSM 644 / CCUG 34227 / NCIMB 8303 / VKM B-1760 / Hildenborough) (Desulfovibrio vulgaris).